The primary structure comprises 128 residues: Fluoride-specific ion channel FluC (128 aa).

The next 4 helical transmembrane spans lie at 2 to 22 (LTFAPLNFLAIGVGATLGAWL), 37 to 57 (WGTLTANLVGGYLIGVMVALI), 65 to 85 (AWIRLAAVTGFLGGLTTFSTF), and 101 to 121 (AAAYAGASLAGSLAMTGLGLA). The Na(+) site is built by G77 and T80.

Belongs to the fluoride channel Fluc/FEX (TC 1.A.43) family.

It is found in the cell inner membrane. It catalyses the reaction fluoride(in) = fluoride(out). Its activity is regulated as follows. Na(+) is not transported, but it plays an essential structural role and its presence is essential for fluoride channel function. Functionally, fluoride-specific ion channel. Important for reducing fluoride concentration in the cell, thus reducing its toxicity. The polypeptide is Fluoride-specific ion channel FluC (Bordetella bronchiseptica (strain ATCC BAA-588 / NCTC 13252 / RB50) (Alcaligenes bronchisepticus)).